Here is a 389-residue protein sequence, read N- to C-terminus: BTB/POZ domain-containing protein KCTD9 (389 aa).

The KHA domain maps to 3–82 (RVTLFLNGSP…PQTDSKPPEG (80 aa)). Residue S11 is modified to Phosphoserine. Positions 89–161 (DWLTLNVGGR…LRHGQLIVND (73 aa)) constitute a BTB domain. Pentapeptide repeat domains lie at 224–256 (NFSGADLSRLDLRYINFKMANLSRCNLAHANLC), 258–297 (ANLERADLSGSVLDCANLQGVKMLCSNAEGASLKLCNFED), and 338–376 (CNLRGATLAGTDLENCDLSGCDLQEANLRGSNVKGAIFE).

As to quaternary structure, forms pentamers. Component of a complex composed of 5 subunits of KCTD9 and 5 CUL3.

Its pathway is protein modification; protein ubiquitination. Substrate-specific adapter of a BCR (BTB-CUL3-RBX1) E3 ubiquitin-protein ligase complex, which mediates the ubiquitination of target proteins, leading to their degradation by the proteasome. This is BTB/POZ domain-containing protein KCTD9 (KCTD9) from Homo sapiens (Human).